A 335-amino-acid polypeptide reads, in one-letter code: Fructose-1,6-bisphosphatase class 1 (335 aa).

Mg(2+) is bound by residues glutamate 92, aspartate 115, leucine 117, and aspartate 118. Residues 118 to 121 (DGSS), asparagine 211, tyrosine 244, 262 to 264 (YLY), and lysine 274 each bind substrate. Glutamate 280 serves as a coordination point for Mg(2+).

The protein belongs to the FBPase class 1 family. In terms of assembly, homotetramer. The cofactor is Mg(2+).

The protein localises to the cytoplasm. It catalyses the reaction beta-D-fructose 1,6-bisphosphate + H2O = beta-D-fructose 6-phosphate + phosphate. It participates in carbohydrate biosynthesis; gluconeogenesis. The sequence is that of Fructose-1,6-bisphosphatase class 1 from Teredinibacter turnerae (strain ATCC 39867 / T7901).